The chain runs to 120 residues: Insoluble matrix shell protein 2 (120 aa).

The first 20 residues, 1-20, serve as a signal peptide directing secretion; that stretch reads MHQSSLGVLVLFSLIYLCIS.

As to expression, component of the acid-insoluble organic matrix of the calcified shell.

The protein resides in the secreted. This is Insoluble matrix shell protein 2 from Ruditapes philippinarum (Japanese carpet shell).